A 424-amino-acid chain; its full sequence is Glutamate-1-semialdehyde 2,1-aminomutase (424 aa).

Lys-263 carries the post-translational modification N6-(pyridoxal phosphate)lysine.

It belongs to the class-III pyridoxal-phosphate-dependent aminotransferase family. HemL subfamily. As to quaternary structure, homodimer. It depends on pyridoxal 5'-phosphate as a cofactor.

It is found in the cytoplasm. It catalyses the reaction (S)-4-amino-5-oxopentanoate = 5-aminolevulinate. The protein operates within porphyrin-containing compound metabolism; protoporphyrin-IX biosynthesis; 5-aminolevulinate from L-glutamyl-tRNA(Glu): step 2/2. This chain is Glutamate-1-semialdehyde 2,1-aminomutase, found in Campylobacter jejuni subsp. jejuni serotype O:2 (strain ATCC 700819 / NCTC 11168).